A 135-amino-acid chain; its full sequence is D-ribose pyranase (135 aa).

Residue H20 is the Proton donor of the active site. Residues D28, H102, and Y124–N126 contribute to the substrate site.

The protein belongs to the RbsD / FucU family. RbsD subfamily. As to quaternary structure, homodecamer.

The protein localises to the cytoplasm. It carries out the reaction beta-D-ribopyranose = beta-D-ribofuranose. Its pathway is carbohydrate metabolism; D-ribose degradation; D-ribose 5-phosphate from beta-D-ribopyranose: step 1/2. Catalyzes the interconversion of beta-pyran and beta-furan forms of D-ribose. The sequence is that of D-ribose pyranase from Rhodopirellula baltica (strain DSM 10527 / NCIMB 13988 / SH1).